A 338-amino-acid polypeptide reads, in one-letter code: MKLRISSLGPVALLASSMMLAFGAQAASADQGIVIYNAQHENLVKSWVDGFTKDTGIKVTLRNGGDSELGNQLVQEGSASPADVFLTENSPAMVLVDNAKLFAPLDAATLAQVEPQYRPSHGRWIGIAARSTVFVYNPAKLSDAQLPKSLLDLAKPEWKGRWAASPSGADFQAIVSALLELKGEKATLAWLKAMKTNFTAYKGNSTVMKAVNAGQVDSGVIYHYYPFVDGAKTGENSNNIKLYYFKHQDPGAFVSISGGGVLASSKHQQQAQAFIKWITGKQGQEILRTNNAFEYAVGVGAASNPKLVPLKDLDAPKVDAAQLNSKKVVELMTEAGLL.

Residues 1–26 (MKLRISSLGPVALLASSMMLAFGAQA) form the signal peptide. 4 residues coordinate Fe cation: histidine 40, glutamate 88, tyrosine 224, and tyrosine 225.

This sequence belongs to the bacterial solute-binding protein 1 family. The complex is composed of two ATP-binding proteins (FbpC), two transmembrane proteins (FbpB) and a solute-binding protein (FbpA).

The protein localises to the periplasm. Functionally, part of the ABC transporter complex FbpABC (TC 3.A.1.10.1) involved in Fe(3+) ions import. This protein specifically binds Fe(3+) and is involved in its transmembrane transport. In Serratia marcescens, this protein is Fe(3+)-binding periplasmic protein (fbpA).